Here is a 218-residue protein sequence, read N- to C-terminus: Ribose-5-phosphate isomerase A (218 aa).

Substrate is bound by residues 28 to 31 (TGST), 81 to 84 (DGAD), and 94 to 97 (KGGG). Glutamate 103 (proton acceptor) is an active-site residue. Residue lysine 121 participates in substrate binding.

It belongs to the ribose 5-phosphate isomerase family. In terms of assembly, homodimer.

The enzyme catalyses aldehydo-D-ribose 5-phosphate = D-ribulose 5-phosphate. Its pathway is carbohydrate degradation; pentose phosphate pathway; D-ribose 5-phosphate from D-ribulose 5-phosphate (non-oxidative stage): step 1/1. Its function is as follows. Catalyzes the reversible conversion of ribose-5-phosphate to ribulose 5-phosphate. The protein is Ribose-5-phosphate isomerase A of Shewanella woodyi (strain ATCC 51908 / MS32).